The following is a 263-amino-acid chain: Putative inactive caspase B (263 aa).

The propeptide at 1–8 (MMCEDASD) is removed in mature form by cps-1 or ced-3.

This sequence belongs to the peptidase C14A family. Interacts with ced-3 (via large subunit p17 or small subunit p13); the interaction inhibits ced-3 autoactivation. In terms of processing, cleavage by csp-1 isoform b or ced-3 removes the propeptide and generates subunit p31 in vitro. An additional cleavage at Asp-149 generates the 2 subunits p17 and p14 but this cleavage appears to be less efficient. In terms of tissue distribution, specifically expressed in the hermaphrodite germline.

It localises to the cytoplasm. In terms of biological role, putative inactive caspase. In the germline, binds caspase ced-3 zymogen and prevents ced-3 autoactivation. Does not affect the caspase activity of mature ced-3 and ced-4-mediated mature ced-3 activation. Negatively regulates germline apoptosis by inhibiting autocleavage of caspase ced-3. Involved in fertility. Functionally, putative inactive caspase. Dispensable for the inhibition of germline apoptosis. The chain is Putative inactive caspase B from Caenorhabditis elegans.